Reading from the N-terminus, the 576-residue chain is DNA primase (576 aa).

The CHC2-type zinc finger occupies 40-64; it reads CPFHNEKTPSFNVVAKKQFYHCFGC. In terms of domain architecture, Toprim spans 251 to 333; that stretch reads DSIIVVEGYM…GLDAGFIFLP (83 aa). Residues Glu257, Asp301, and Asp303 each coordinate Mg(2+).

The protein belongs to the DnaG primase family. Monomer. Interacts with DnaB. The cofactor is Zn(2+). Mg(2+) serves as cofactor.

The catalysed reaction is ssDNA + n NTP = ssDNA/pppN(pN)n-1 hybrid + (n-1) diphosphate.. Its function is as follows. RNA polymerase that catalyzes the synthesis of short RNA molecules used as primers for DNA polymerase during DNA replication. The chain is DNA primase from Legionella pneumophila.